The primary structure comprises 138 residues: Large ribosomal subunit protein bL17 (138 aa).

It belongs to the bacterial ribosomal protein bL17 family. Part of the 50S ribosomal subunit. Contacts protein L32.

The sequence is that of Large ribosomal subunit protein bL17 from Phenylobacterium zucineum (strain HLK1).